A 131-amino-acid chain; its full sequence is Small ribosomal subunit protein uS8 (131 aa).

Belongs to the universal ribosomal protein uS8 family. Part of the 30S ribosomal subunit. Contacts proteins S5 and S12.

Functionally, one of the primary rRNA binding proteins, it binds directly to 16S rRNA central domain where it helps coordinate assembly of the platform of the 30S subunit. In Vesicomyosocius okutanii subsp. Calyptogena okutanii (strain HA), this protein is Small ribosomal subunit protein uS8.